The sequence spans 346 residues: Phosphate acyltransferase (346 aa).

Belongs to the PlsX family. As to quaternary structure, homodimer. Probably interacts with PlsY.

Its subcellular location is the cytoplasm. The catalysed reaction is a fatty acyl-[ACP] + phosphate = an acyl phosphate + holo-[ACP]. It functions in the pathway lipid metabolism; phospholipid metabolism. In terms of biological role, catalyzes the reversible formation of acyl-phosphate (acyl-PO(4)) from acyl-[acyl-carrier-protein] (acyl-ACP). This enzyme utilizes acyl-ACP as fatty acyl donor, but not acyl-CoA. In Pelobacter propionicus (strain DSM 2379 / NBRC 103807 / OttBd1), this protein is Phosphate acyltransferase.